A 588-amino-acid chain; its full sequence is Adenine deaminase (588 aa).

Belongs to the metallo-dependent hydrolases superfamily. Adenine deaminase family. Homodimer. The cofactor is Mn(2+).

The enzyme catalyses adenine + H2O + H(+) = hypoxanthine + NH4(+). The polypeptide is Adenine deaminase (Shigella boydii serotype 4 (strain Sb227)).